Consider the following 81-residue polypeptide: uncharacterized protein (81 aa).

2 helical membrane passes run 1–21 and 27–47; these read MTLF…FSLL and IFIY…HHFF.

The protein resides in the membrane. This is an uncharacterized protein from Saccharomyces cerevisiae (strain ATCC 204508 / S288c) (Baker's yeast).